The primary structure comprises 321 residues: MSEQSKDLSDPNFAAEAPNSEVHSSPGVSEGVPPSATLAEPQSPPLGPTAAPQAAPPPQAPNDEGDPKALQQAAEEGRAHQAPSAAQPGPAPPAPAQLVQKAHELMWYVLVKDQKKMIIWFPDMVKDVIGSYKKWCRSILRRTSLILARVFGLHLRLTSLHTMEFALVKALEPEELDRVALSNRMPMTGLLLMILSLIYVKGRGARESAVWNVLRILGLRPWKKHSTFGDVRKLITEEFVQMNYLKYQRVPYVEPPEYEFFWGSRASREITKMQIMEFLARVFKKDPQAWPSRYREALEEARALREANPTAHYPRSSVSED.

Residues Met-1–Ala-96 form a disordered region. Over residues Ser-20–Ser-35 the composition is skewed to low complexity. The region spanning Leu-98–Ala-297 is the MAGE domain.

As to quaternary structure, binds to the transactivation domains of E2F1 and p53. Binds also SV40 large T antigen and adenovirus E1A. Interacts with nucleobindin 1 and 2. As to expression, almost ubiquitous. Detected in fetal brain, lung, liver and kidney; in adult heart, brain, placenta, lung, liver, skeletal muscle, kidney, pancreas, spleen, thymus, prostate, testis, ovary, small intestine and colon. Not detected in peripheral blood leukocytes. In brain, restricted to post-mitotic neurons.

It localises to the perikaryon. The protein localises to the nucleus. Growth suppressor that facilitates the entry of the cell into cell cycle arrest. Functionally similar to the retinoblastoma protein it binds to and represses the activity of cell-cycle-promoting proteins such as SV40 large T antigen, adenovirus E1A, and the transcription factor E2F. Necdin also interacts with p53 and works in an additive manner to inhibit cell growth. Also functions as a transcription factor and directly binds to specific guanosine-rich DNA sequences. The chain is Necdin (NDN) from Homo sapiens (Human).